Reading from the N-terminus, the 806-residue chain is Leucine--tRNA ligase (806 aa).

The 'HIGH' region motif lies at 40–51 (PYPSGKGLHVGH). Positions 580–584 (KMSKS) match the 'KMSKS' region motif. Lys583 provides a ligand contact to ATP.

Belongs to the class-I aminoacyl-tRNA synthetase family.

It is found in the cytoplasm. It carries out the reaction tRNA(Leu) + L-leucine + ATP = L-leucyl-tRNA(Leu) + AMP + diphosphate. The polypeptide is Leucine--tRNA ligase (Ureaplasma urealyticum serovar 10 (strain ATCC 33699 / Western)).